The chain runs to 229 residues: MIDHTHLRLFQFCDSQFPTGAFSHSFGLETYIQRNIIHDDHTFIAWLKMFLQEQLTYSDGLAMRLVYDALENDDTQKVLHIDKLMFVQNLPKETRVGAKQMGTRMVKLALELYNNPWIAWYHQQMQDKKAKLNPAICFTMLGHYLGVDIETIIDYYLYQNVSSLTQNAVRAIPLGQTAGQKIVTHMIPYIEETRKQIFELKEADFGMTAPGLELNQMAHENVNVRIFIS.

This sequence belongs to the UreF family. In terms of assembly, ureD, UreF and UreG form a complex that acts as a GTP-hydrolysis-dependent molecular chaperone, activating the urease apoprotein by helping to assemble the nickel containing metallocenter of UreC. The UreE protein probably delivers the nickel.

Its subcellular location is the cytoplasm. In terms of biological role, required for maturation of urease via the functional incorporation of the urease nickel metallocenter. The protein is Urease accessory protein UreF of Staphylococcus aureus (strain MRSA252).